Consider the following 356-residue polypeptide: Outer membrane protein Omp38 (356 aa).

An N-terminal signal peptide occupies residues 1 to 19 (MKLSRIALATMLVAAPLAA). One can recognise an OmpA-like domain in the interval 221–339 (ELTEDLNMEL…RVFATITGSR (119 aa)).

Belongs to the outer membrane OOP (TC 1.B.6) superfamily. Homotrimer.

It localises to the cell outer membrane. Porin. Induces apoptosis in human cells through caspases-dependent and AIF-dependent pathways. Purified Omp38 enters the cells and localizes to the mitochondria, which leads to a release of proapoptotic molecules such as cytochrome c and AIF (apoptosis-inducing factor). In Acinetobacter baumannii (strain ATCC 17978 / DSM 105126 / CIP 53.77 / LMG 1025 / NCDC KC755 / 5377), this protein is Outer membrane protein Omp38 (omp38).